Here is a 74-residue protein sequence, read N- to C-terminus: Kappa-scoloptoxin(07)-Ssm2e (74 aa).

A signal peptide spans Met1–Gly19. Positions Ala20 to Asn41 are excised as a propeptide.

The protein belongs to the scoloptoxin-07 family. In terms of processing, contains 3 disulfide bonds. As to expression, expressed by the venom gland.

The protein resides in the secreted. Functionally, inhibits voltage-gated potassium channels. The protein is Kappa-scoloptoxin(07)-Ssm2e of Scolopendra mutilans (Chinese red-headed centipede).